Consider the following 371-residue polypeptide: Peptidyl-prolyl cis-trans isomerase D (371 aa).

Residues 11–172 (FFDIQIGNEK…KDVTIVECGE (162 aa)) enclose the PPIase cyclophilin-type domain. The tract at residues 175-195 (GQDYDDADKQTPDATGDPYED) is disordered. TPR repeat units follow at residues 214–247 (ASELKNFGNAAFKSGNLALGLEKYQKGLRYLHEF), 267–300 (FALHSNSSLLANKLAQYGNGRSWATYALDTANAA), and 308–341 (AKAYYRRAVASSGLKEEDEALKDLQEAEKLAPGD).

Belongs to the cyclophilin-type PPIase family. PPIase D subfamily.

Its subcellular location is the cytoplasm. It catalyses the reaction [protein]-peptidylproline (omega=180) = [protein]-peptidylproline (omega=0). PPIases accelerate the folding of proteins. It catalyzes the cis-trans isomerization of proline imidic peptide bonds in oligopeptides. This is Peptidyl-prolyl cis-trans isomerase D (cpr6) from Aspergillus oryzae (strain ATCC 42149 / RIB 40) (Yellow koji mold).